The chain runs to 294 residues: Elongation factor Ts (294 aa).

The involved in Mg(2+) ion dislocation from EF-Tu stretch occupies residues 79–82; the sequence is TDFV.

The protein belongs to the EF-Ts family.

It localises to the cytoplasm. Its function is as follows. Associates with the EF-Tu.GDP complex and induces the exchange of GDP to GTP. It remains bound to the aminoacyl-tRNA.EF-Tu.GTP complex up to the GTP hydrolysis stage on the ribosome. In Oceanobacillus iheyensis (strain DSM 14371 / CIP 107618 / JCM 11309 / KCTC 3954 / HTE831), this protein is Elongation factor Ts.